Reading from the N-terminus, the 269-residue chain is Hydroxypyruvate/pyruvate aldolase (269 aa).

Residue His-48 is the Proton acceptor of the active site. Glu-152 and Asp-178 together coordinate a divalent metal cation.

Belongs to the HpcH/HpaI aldolase family. Requires a divalent metal cation as cofactor.

The catalysed reaction is D-glyceraldehyde + pyruvate = 2-dehydro-3-deoxy-L-galactonate. Its function is as follows. Aldolase which can catalyze in vitro the aldolisation reaction between hydroxypyruvate (HPA) or pyruvate (PA) and D-glyceraldehyde (D-GA). The condensation of pyruvate and D-glyceraldehyde produces 2-dehydro-3-deoxy-L-galactonate as the major product. Has weak activity with hydroxypyruvate and D-glyceraldehyde. The sequence is that of Hydroxypyruvate/pyruvate aldolase from Delftia acidovorans (strain DSM 14801 / SPH-1).